Reading from the N-terminus, the 121-residue chain is NADH-quinone oxidoreductase subunit 7 (121 aa).

3 consecutive transmembrane segments (helical) span residues 11–31, 65–85, and 93–113; these read ILVF…AAAV, LVSI…PWAV, and VAFW…AYEW.

Belongs to the complex I subunit 3 family. As to quaternary structure, NDH-1 is composed of at least 14 different subunits, Nqo1 to Nqo14. The complex has a L-shaped structure, with the hydrophobic arm (subunits Nqo7, Nqo8, Nqo10 to Nqo14) embedded in the inner membrane and the hydrophilic peripheral arm (subunits Nqo1 to Nqo6, Nqo9) protruding into the bacterial cytoplasm. The hydrophilic domain contains all the redox centers.

It localises to the cell inner membrane. The catalysed reaction is a quinone + NADH + 5 H(+)(in) = a quinol + NAD(+) + 4 H(+)(out). In terms of biological role, NDH-1 shuttles electrons from NADH, via FMN and iron-sulfur (Fe-S) centers, to quinones in the respiratory chain. The immediate electron acceptor for the enzyme in this species is believed to be ubiquinone. Couples the redox reaction to proton translocation (for every two electrons transferred, four hydrogen ions are translocated across the cytoplasmic membrane), and thus conserves the redox energy in a proton gradient. The protein is NADH-quinone oxidoreductase subunit 7 (nqo7) of Paracoccus denitrificans.